Reading from the N-terminus, the 455-residue chain is Xylan O-acetyltransferase 3 (455 aa).

A compositionally biased stretch (low complexity) spans 1–15 (MSKPQQQSPPSTTTT). Residues 1 to 32 (MSKPQQQSPPSTTTTSPPPPPPSTPPPASSSR) are disordered. Residues 1 to 42 (MSKPQQQSPPSTTTTSPPPPPPSTPPPASSSRSLLSALRRSP) are Cytoplasmic-facing. Positions 16 to 28 (SPPPPPPSTPPPA) are enriched in pro residues. The helical; Signal-anchor for type II membrane protein transmembrane segment at 43-59 (VTTLVAAFFLLALFMYG) threads the bilayer. Residues 60 to 455 (EDVRTLAELS…PSTHPSLPPQ (396 aa)) are Lumenal-facing. N-linked (GlcNAc...) asparagine glycans are attached at residues Asn82, Asn107, and Asn146. 4 disulfide bridges follow: Cys96-Cys147, Cys118-Cys183, Cys127-Cys423, and Cys339-Cys419. Residues 170-172 (GDS) carry the GDS motif motif. Ser172 (nucleophile) is an active-site residue. 2 N-linked (GlcNAc...) asparagine glycosylation sites follow: Asn278 and Asn348. The Proton donor role is filled by Asp418. Positions 418–421 (DCIH) match the DXXH motif motif. Residue His421 is the Proton acceptor of the active site.

Belongs to the PC-esterase family. TBL subfamily. Highly expressed in leaves. Expressed in roots, stems and inflorescences.

The protein localises to the golgi apparatus membrane. In terms of biological role, xylan acetyltransferase required for 2-O- and 3-O-monoacetylation of xylosyl residues in xylan. Catalyzes the 2-O-acetylation of xylan, followed by nonenzymatic acetyl migration to the O-3 position, resulting in products that are monoacetylated at both O-2 and O-3 positions. The chain is Xylan O-acetyltransferase 3 from Oryza sativa subsp. japonica (Rice).